A 547-amino-acid polypeptide reads, in one-letter code: Cilia- and flagella- associated protein 210 (547 aa).

3 coiled-coil regions span residues 50–131, 183–251, and 342–405; these read ERIR…RKKA, VKLN…MKKN, and IARD…KADK. Residues 214 to 237 form a disordered region; sequence KQIEEHKEEEEARKKSEEKDAEEM.

In terms of assembly, microtubule inner protein component of sperm flagellar doublet microtubules.

The protein resides in the cytoplasm. It localises to the cytoskeleton. Its subcellular location is the cilium axoneme. It is found in the flagellum axoneme. In terms of biological role, microtubule inner protein (MIP) part of the dynein-decorated doublet microtubules (DMTs) in cilia axoneme, which is required for motile cilia beating. The protein is Cilia- and flagella- associated protein 210 (Cfap210) of Mus musculus (Mouse).